A 313-amino-acid polypeptide reads, in one-letter code: tRNA dimethylallyltransferase (313 aa).

17–24 (GPTASGKT) contributes to the ATP binding site. 19 to 24 (TASGKT) lines the substrate pocket. Interaction with substrate tRNA regions lie at residues 42 to 45 (DSAL), 166 to 170 (QRLSR), and 247 to 252 (RCVGYR).

Belongs to the IPP transferase family. In terms of assembly, monomer. Requires Mg(2+) as cofactor.

The catalysed reaction is adenosine(37) in tRNA + dimethylallyl diphosphate = N(6)-dimethylallyladenosine(37) in tRNA + diphosphate. Catalyzes the transfer of a dimethylallyl group onto the adenine at position 37 in tRNAs that read codons beginning with uridine, leading to the formation of N6-(dimethylallyl)adenosine (i(6)A). The chain is tRNA dimethylallyltransferase from Pectobacterium atrosepticum (strain SCRI 1043 / ATCC BAA-672) (Erwinia carotovora subsp. atroseptica).